The sequence spans 183 residues: Putative 3-methyladenine DNA glycosylase (183 aa).

It belongs to the DNA glycosylase MPG family.

This chain is Putative 3-methyladenine DNA glycosylase, found in Rickettsia peacockii (strain Rustic).